A 425-amino-acid chain; its full sequence is UPF0597 protein VSAL_I0741 (425 aa).

Belongs to the UPF0597 family.

The polypeptide is UPF0597 protein VSAL_I0741 (Aliivibrio salmonicida (strain LFI1238) (Vibrio salmonicida (strain LFI1238))).